The following is a 396-amino-acid chain: NADH-quinone oxidoreductase subunit D (396 aa).

This sequence belongs to the complex I 49 kDa subunit family. NDH-1 is composed of 14 different subunits. Subunits NuoB, C, D, E, F, and G constitute the peripheral sector of the complex.

It is found in the cell inner membrane. It carries out the reaction a quinone + NADH + 5 H(+)(in) = a quinol + NAD(+) + 4 H(+)(out). Functionally, NDH-1 shuttles electrons from NADH, via FMN and iron-sulfur (Fe-S) centers, to quinones in the respiratory chain. The immediate electron acceptor for the enzyme in this species is believed to be ubiquinone. Couples the redox reaction to proton translocation (for every two electrons transferred, four hydrogen ions are translocated across the cytoplasmic membrane), and thus conserves the redox energy in a proton gradient. This is NADH-quinone oxidoreductase subunit D from Brucella canis (strain ATCC 23365 / NCTC 10854 / RM-666).